A 619-amino-acid polypeptide reads, in one-letter code: Bifunctional glutathionylspermidine synthetase/amidase (619 aa).

The tract at residues 2–195 (SKGTTSQDAP…LGWMIQTEDT (194 aa)) is gsp amidase. The Peptidase C51 domain maps to 34–176 (DPQEYEDDAV…MVVENGCYTL (143 aa)). Q58 contacts glutathionylspermidine. C59 serves as the catalytic S-(gamma-glutamyl-cysteinyl-glycyl)-cysteine intermediate. C59 carries the cysteine sulfenic acid (-SOH); transient modification. Glutathionylspermidine-binding positions include R64, 78-81 (VGMA), and N149. Positions 196 to 205 (EYSLPQPEIA) are linker. Residues 206 to 619 (GELLKISGAR…DIEPLIVVKK (414 aa)) form a gsp synthetase region. Residue R316 participates in glutathione binding. 316–318 (RMD) provides a ligand contact to ATP. D318, E330, and N332 together coordinate Mg(2+). S335 serves as a coordination point for glutathione. E391 provides a ligand contact to spermidine. The glutathione site is built by E392 and T446. Residues K498, K533, 539–540 (CG), 568–571 (QQLW), Q582, and 603–605 (LVI) each bind ATP. Residue D610 participates in spermidine binding.

In the C-terminal section; belongs to the glutathionylspermidine synthase preATP-grasp family. In terms of assembly, homodimer. Post-translationally, oxidation of Cys-59 to sulfenic acid during oxidative stress selectively inhibits the amidase activity which leads to a rapid increase in the amounts of intracellular Gsp and Gsp S-thiolated proteins (GspSSPs).

It carries out the reaction spermidine + glutathione + ATP = glutathionylspermidine + ADP + phosphate + H(+). It catalyses the reaction glutathionylspermidine + H2O = spermidine + glutathione. It functions in the pathway sulfur metabolism; glutathione metabolism. The protein operates within amine and polyamine metabolism; spermidine metabolism. With respect to regulation, when exposed to oxidative stress, Gsp amidase activity is transiently inhibited in vivo by oxidation of the catalytic Cys-59 thiol to sulfenic acid; this modification does not affect Gsp synthetase activity. Gsp amidase activity is negatively autoregulated by the Gsp synthetase domain, and is activated by the Gsp synthetase substrates, GSH and ATP-Mg(2+); the occupancy of the synthetase active site may initiate communication through the protein as manifest by the release of inhibition of the amidase activity. A tetrahedral phosphonate analog of glutathionylspermidine, designed as a mimic of the proposed tetrahedral intermediate for either reaction, inhibits the synthetase activity (Ki of 10 uM) but does not inhibit the amidase activity. Amidase activity is inhibited by iodoacetamide in vitro. Functionally, catalyzes the formation of an amide bond between glutathione (GSH) and spermidine coupled with hydrolysis of ATP; also catalyzes the opposing reaction, i.e. the hydrolysis of glutathionylspermidine (Gsp) back to glutathione and spermidine. The amidase active site can also hydrolyze Gsp-disulfide (Gsp-S-S-Gsp) to Gsp-SG and Gsp S-thiolated proteins (GspSSPs) to GSH S-thiolated protein (GSSPs). Likely acts synergistically with glutaredoxin to regulate the redox environment of E.coli and defend against oxidative damage. In vitro, the amidase active site also catalyzes hydrolysis of amide and ester derivatives of glutathione (e.g. glutathione ethyl ester and glutathione amide) but lacks activity toward acetylspermidine (N1 and N8) and acetylspermine (N1). This chain is Bifunctional glutathionylspermidine synthetase/amidase (gss), found in Escherichia coli (strain K12).